The following is a 124-amino-acid chain: Small ribosomal subunit protein uS12 (124 aa).

Aspartate 89 is subject to 3-methylthioaspartic acid.

This sequence belongs to the universal ribosomal protein uS12 family. In terms of assembly, part of the 30S ribosomal subunit. Contacts proteins S8 and S17. May interact with IF1 in the 30S initiation complex.

With S4 and S5 plays an important role in translational accuracy. Its function is as follows. Interacts with and stabilizes bases of the 16S rRNA that are involved in tRNA selection in the A site and with the mRNA backbone. Located at the interface of the 30S and 50S subunits, it traverses the body of the 30S subunit contacting proteins on the other side and probably holding the rRNA structure together. The combined cluster of proteins S8, S12 and S17 appears to hold together the shoulder and platform of the 30S subunit. The protein is Small ribosomal subunit protein uS12 of Moorella thermoacetica (strain ATCC 39073 / JCM 9320).